Consider the following 175-residue polypeptide: Nucleoside triphosphate/diphosphate phosphatase (175 aa).

Arg23 serves as the catalytic Proton donor. Residues Asn87, Asp103, Asp105, Asp107, Asp120, and Glu123 each coordinate Mg(2+).

It belongs to the Ntdp family. Mg(2+) is required as a cofactor.

It catalyses the reaction a ribonucleoside 5'-triphosphate + H2O = a ribonucleoside 5'-diphosphate + phosphate + H(+). It carries out the reaction a ribonucleoside 5'-diphosphate + H2O = a ribonucleoside 5'-phosphate + phosphate + H(+). Its function is as follows. Has nucleoside phosphatase activity towards nucleoside triphosphates and nucleoside diphosphates. The protein is Nucleoside triphosphate/diphosphate phosphatase of Shouchella clausii (strain KSM-K16) (Alkalihalobacillus clausii).